Consider the following 435-residue polypeptide: Oxaloacetate decarboxylase beta chain (435 aa).

9 consecutive transmembrane segments (helical) span residues 13 to 35 (IMHITLGQVIMIIVSLILLWLAI), 42 to 64 (LLLLPIGFGGLLSNIPEAGLAMT), 123 to 145 (ILALFYKVAIGYGVAPLIIFMGV), 165 to 187 (AAAQFGIFTTVLGALGLNWLGII), 215 to 237 (LAPELLGAIAVAAYSYMALVPLI), 267 to 289 (IVFPIVLLLLVALLLPDAAPLLG), 309 to 328 (TAQNALINIVTIFLGLSVGA), 340 to 362 (TLGILLLGIVAFAIGTASGVIMA), and 404 to 426 (FLLMHAMGPNVAGVISSAIAAGI).

This sequence belongs to the GcdB/MmdB/OadB family. Heterotrimer of an alpha, a beta and a gamma subunit. It depends on Na(+) as a cofactor.

It is found in the cell membrane. The enzyme catalyses oxaloacetate + 2 Na(+)(in) + H(+) = pyruvate + 2 Na(+)(out) + CO2. Functionally, catalyzes the decarboxylation of oxaloacetate coupled to Na(+) translocation. The polypeptide is Oxaloacetate decarboxylase beta chain (oadB) (Haemophilus ducreyi (strain 35000HP / ATCC 700724)).